Consider the following 441-residue polypeptide: Ribosomal protein uS12 methylthiotransferase RimO (441 aa).

The MTTase N-terminal domain occupies Pro-8–Pro-118. Residues Cys-17, Cys-53, Cys-82, Cys-150, Cys-154, and Cys-157 each coordinate [4Fe-4S] cluster. The Radical SAM core domain occupies Leu-136–Glu-373. The region spanning Gln-376 to Val-441 is the TRAM domain.

It belongs to the methylthiotransferase family. RimO subfamily. The cofactor is [4Fe-4S] cluster.

Its subcellular location is the cytoplasm. It carries out the reaction L-aspartate(89)-[ribosomal protein uS12]-hydrogen + (sulfur carrier)-SH + AH2 + 2 S-adenosyl-L-methionine = 3-methylsulfanyl-L-aspartate(89)-[ribosomal protein uS12]-hydrogen + (sulfur carrier)-H + 5'-deoxyadenosine + L-methionine + A + S-adenosyl-L-homocysteine + 2 H(+). Catalyzes the methylthiolation of an aspartic acid residue of ribosomal protein uS12. The protein is Ribosomal protein uS12 methylthiotransferase RimO of Shigella sonnei (strain Ss046).